A 480-amino-acid polypeptide reads, in one-letter code: GTPase Obg (480 aa).

The region spanning 2–159 (TRFIDRVVIH…RDLTLELKTV (158 aa)) is the Obg domain. Positions 160–341 (ADVGLVGFPS…LTFALWDMVA (182 aa)) constitute an OBG-type G domain. GTP-binding positions include 166–173 (GFPSAGKS), 191–195 (FTTLA), 212–215 (DVPG), 292–295 (NKID), and 322–324 (STV). Residues Ser-173 and Thr-193 each coordinate Mg(2+). One can recognise an OCT domain in the interval 359–437 (PIPVDETAFS…IGDMTFDWEP (79 aa)). The segment at 441 to 480 (AGVDVPLTGRGTDVRLEQTDRVGADERKAARKARRQSGDE) is disordered. The span at 452 to 468 (TDVRLEQTDRVGADERK) shows a compositional bias: basic and acidic residues. Over residues 469-480 (AARKARRQSGDE) the composition is skewed to basic residues.

It belongs to the TRAFAC class OBG-HflX-like GTPase superfamily. OBG GTPase family. In terms of assembly, monomer. Requires Mg(2+) as cofactor.

It is found in the cytoplasm. In terms of biological role, an essential GTPase which binds GTP, GDP and possibly (p)ppGpp with moderate affinity, with high nucleotide exchange rates and a fairly low GTP hydrolysis rate. Plays a role in control of the cell cycle, stress response, ribosome biogenesis and in those bacteria that undergo differentiation, in morphogenesis control. This chain is GTPase Obg, found in Mycolicibacterium vanbaalenii (strain DSM 7251 / JCM 13017 / BCRC 16820 / KCTC 9966 / NRRL B-24157 / PYR-1) (Mycobacterium vanbaalenii).